We begin with the raw amino-acid sequence, 754 residues long: LON peptidase N-terminal domain and RING finger protein 2 (754 aa).

TPR repeat units lie at residues 23 to 58 (IAQRLEEGDEAFRAGDYEMAAELFRSMLAGLAQPDR) and 59 to 91 (GLCLRLGDALARAGRLPEALGAFRGAARLGALR). The tract at residues 112-136 (PLSAENPGGEPEAPGEGGPAPEPRA) is disordered. The segment covering 115-125 (AENPGGEPEAP) has biased composition (low complexity). TPR repeat units lie at residues 197–230 (LRRLAGQARSLQRQQQPEAALLRCDQALELAPDD), 231–264 (NSLLLLRAELYLTMKNYEQALQDASAACQNEPLL), and 266–298 (KGHQVKAQALSGLGRSKEVLKEFLYCLALNPEC). The interval 398–439 (GLKRQFPDDVEDAPDLNAPGKIPKKDLSLQRSPNSETEESQG) is disordered. The segment covering 426–439 (LQRSPNSETEESQG) has biased composition (polar residues). The stretch at 447–483 (FECALCMRLLFEPVTTPCGHTFCLKCLERCLDHAPHC) is one TPR 6 repeat. The RING-type zinc-finger motif lies at 449-487 (CALCMRLLFEPVTTPCGHTFCLKCLERCLDHAPHCPLCK). Residues 528–737 (MSELSNLTRD…AIRRILVIIT (210 aa)) form the Lon N-terminal domain.

The polypeptide is LON peptidase N-terminal domain and RING finger protein 2 (LONRF2) (Homo sapiens (Human)).